The chain runs to 111 residues: T cell receptor beta variable 30 (111 aa).

The N-terminal stretch at 1-18 is a signal peptide; that stretch reads MLCSLLALLLGTFFGVRS. In terms of domain architecture, Ig-like spans 19–111; it reads QTIHQWPATL…DSGFYLCAWS (93 aa). Cys40 and Cys108 are oxidised to a cystine. A glycan (N-linked (GlcNAc...) asparagine) is linked at Asn80.

In terms of assembly, alpha-beta TR is a heterodimer composed of an alpha and beta chain; disulfide-linked. The alpha-beta TR is associated with the transmembrane signaling CD3 coreceptor proteins to form the TR-CD3 (TcR or TCR). The assembly of alpha-beta TR heterodimers with CD3 occurs in the endoplasmic reticulum where a single alpha-beta TR heterodimer associates with one CD3D-CD3E heterodimer, one CD3G-CD3E heterodimer and one CD247 homodimer forming a stable octameric structure. CD3D-CD3E and CD3G-CD3E heterodimers preferentially associate with TR alpha and TR beta chains, respectively. The association of the CD247 homodimer is the last step of TcR assembly in the endoplasmic reticulum and is required for transport to the cell surface.

The protein localises to the cell membrane. In terms of biological role, v region of the variable domain of T cell receptor (TR) beta chain that participates in the antigen recognition. Alpha-beta T cell receptors are antigen specific receptors which are essential to the immune response and are present on the cell surface of T lymphocytes. Recognize peptide-major histocompatibility (MH) (pMH) complexes that are displayed by antigen presenting cells (APC), a prerequisite for efficient T cell adaptive immunity against pathogens. Binding of alpha-beta TR to pMH complex initiates TR-CD3 clustering on the cell surface and intracellular activation of LCK that phosphorylates the ITAM motifs of CD3G, CD3D, CD3E and CD247 enabling the recruitment of ZAP70. In turn ZAP70 phosphorylates LAT, which recruits numerous signaling molecules to form the LAT signalosome. The LAT signalosome propagates signal branching to three major signaling pathways, the calcium, the mitogen-activated protein kinase (MAPK) kinase and the nuclear factor NF-kappa-B (NF-kB) pathways, leading to the mobilization of transcription factors that are critical for gene expression and essential for T cell growth and differentiation. The T cell repertoire is generated in the thymus, by V-(D)-J rearrangement. This repertoire is then shaped by intrathymic selection events to generate a peripheral T cell pool of self-MH restricted, non-autoaggressive T cells. Post-thymic interaction of alpha-beta TR with the pMH complexes shapes TR structural and functional avidity. This is T cell receptor beta variable 30 from Homo sapiens (Human).